Consider the following 121-residue polypeptide: Small ribosomal subunit protein uS13 (121 aa).

Residues 91-121 (HKRGLPVRGQRTRTNARTRKGPRRAAASLKK) are disordered.

This sequence belongs to the universal ribosomal protein uS13 family. Part of the 30S ribosomal subunit. Forms a loose heterodimer with protein S19. Forms two bridges to the 50S subunit in the 70S ribosome.

In terms of biological role, located at the top of the head of the 30S subunit, it contacts several helices of the 16S rRNA. In the 70S ribosome it contacts the 23S rRNA (bridge B1a) and protein L5 of the 50S subunit (bridge B1b), connecting the 2 subunits; these bridges are implicated in subunit movement. Contacts the tRNAs in the A and P-sites. The protein is Small ribosomal subunit protein uS13 of Bordetella petrii (strain ATCC BAA-461 / DSM 12804 / CCUG 43448).